Here is a 1010-residue protein sequence, read N- to C-terminus: PHD finger protein 20 (1010 aa).

2 consecutive Tudor domains span residues 4 to 69 (HPPN…RPLE) and 83 to 147 (GSSE…GNAR). Disordered regions lie at residues 142–373 (IVGN…EGQL) and 483–609 (EKSP…GKLK). Residues 147–246 (RPKETDHKSL…VEKKPEKDLV (100 aa)) are compositionally biased toward basic and acidic residues. Residue serine 159 is modified to Phosphoserine. Positions 257–269 (KRKRGRPPSITPT) form a DNA-binding region, a.T hook. The span at 267 to 280 (TPTAVDSNSQTLQP) shows a compositional bias: polar residues. 3 stretches are compositionally biased toward basic and acidic residues: residues 292 to 325 (KRSD…DLSR), 483 to 493 (EKSPEPEEGPG), and 525 to 541 (AKEK…ELVR). The C2H2-type zinc finger occupies 455–485 (FRCKVLDCLKFFRKAKLLHYHMKYFHGMEKS). The segment covering 542–554 (VKPKKKKKKKKKT) has biased composition (basic residues). A PHD-type zinc finger spans residues 657–703 (RCICEVQEENDFMIQCEECQCWQHGVCMGLLEENVPEKYTCYVCQDP). Residues 804–827 (RSEESPSYRTLNGAVEKPSPLPRS) form a disordered region. An N6-acetyllysine modification is found at lysine 841. Phosphoserine is present on residues serine 876 and serine 878. Residues 877-902 (LSPRLGWPIDQDRSRGDIDPKPSSPK) form a disordered region. Residues 886–902 (DQDRSRGDIDPKPSSPK) are compositionally biased toward basic and acidic residues.

In terms of assembly, homodimer; disulfide-linked. Component of some MLL1/MLL complex, at least composed of the core components KMT2A/MLL1, ASH2L, HCFC1, WDR5 and RBBP5, as well as the facultative components BACC1, CHD8, E2F6, HSP70, INO80C, KANSL1, LAS1L, MAX, MCRS1, MGA, MYST1/MOF, PELP1, PHF20, PRP31, RING2, RUVB1/TIP49A, RUVB2/TIP49B, SENP3, TAF1, TAF4, TAF6, TAF7, TAF9 and TEX10. Component of the NSL complex at least composed of MOF/KAT8, KANSL1, KANSL2, KANSL3, MCRS1, PHF20, OGT1/OGT, WDR5 and HCFC1. Ubiquitinated by TRIM26; leading to proteasomal degradation.

The protein localises to the nucleus. In terms of biological role, contributes to methyllysine-dependent p53/TP53 stabilization and up-regulation after DNA damage. Methyllysine-binding protein, component of the MOF histone acetyltransferase protein complex. Not required for maintaining the global histone H4 'Lys-16' acetylation (H4K16ac) levels or locus specific histone acetylation, but instead works downstream in transcriptional regulation of MOF target genes. As part of the NSL complex it may be involved in acetylation of nucleosomal histone H4 on several lysine residues. The sequence is that of PHD finger protein 20 (Phf20) from Mus musculus (Mouse).